Reading from the N-terminus, the 290-residue chain is Sodium/potassium-transporting ATPase subunit beta-2 (290 aa).

At 1–39 (MVIQKEKKSCGQVVEEWKEFVWNPRTHQFMGRTGTSWAF) the chain is on the cytoplasmic side. The helical; Signal-anchor for type II membrane protein transmembrane segment at 40–67 (ILLFYLVFYGFLTAMFTLTMWVMLQTVS) threads the bilayer. The Extracellular segment spans residues 68 to 290 (DHTPKYQDRL…VAFKLRINKA (223 aa)). N-linked (GlcNAc...) asparagine glycans are attached at residues Asn-96 and Asn-118. Cys-129 and Cys-150 are joined by a disulfide. 2 N-linked (GlcNAc...) asparagine glycosylation sites follow: Asn-153 and Asn-159. Cys-160 and Cys-177 are joined by a disulfide. N-linked (GlcNAc...) asparagine glycosylation is found at Asn-193, Asn-197, and Asn-238. Positions 193–290 (NQSMNVTCVG…VAFKLRINKA (98 aa)) are immunoglobulin-like. Cys-200 and Cys-261 are oxidised to a cystine.

This sequence belongs to the X(+)/potassium ATPases subunit beta family. The sodium/potassium-transporting ATPase is composed of a catalytic alpha subunit, an auxiliary non-catalytic beta subunit and an additional regulatory subunit. Interacts with isoform 2 of BSG. In terms of tissue distribution, highly expressed in brain (at protein level).

It is found in the cell membrane. Its function is as follows. This is the non-catalytic component of the active enzyme, which catalyzes the hydrolysis of ATP coupled with the exchange of Na(+) and K(+) ions across the plasma membrane. The exact function of the beta-2 subunit is not known. Mediates cell adhesion of neurons and astrocytes, and promotes neurite outgrowth. This Rattus norvegicus (Rat) protein is Sodium/potassium-transporting ATPase subunit beta-2 (Atp1b2).